Reading from the N-terminus, the 105-residue chain is Unclassified hydrophobin D (105 aa).

Residues 1–18 form the signal peptide; it reads MKFYIVLLALAAFAMAEA. 3 cysteine pairs are disulfide-bonded: Cys35–Cys86, Cys42–Cys83, and Cys43–Cys49.

It localises to the secreted. It is found in the cell wall. Aerial growth, conidiation, and dispersal of filamentous fungi in the environment rely upon a capability of their secreting small amphipathic proteins called hydrophobins (HPBs) with low sequence identity. Class I can self-assemble into an outermost layer of rodlet bundles on aerial cell surfaces, conferring cellular hydrophobicity that supports fungal growth, development and dispersal; whereas Class II form highly ordered films at water-air interfaces through intermolecular interactions but contribute nothing to the rodlet structure. In P.expansum, hydrophobins contribute to germination, tolerance to cold stress and mycotoxins patulin and citrinin production. The protein is Unclassified hydrophobin D of Penicillium expansum (Blue mold rot fungus).